A 729-amino-acid chain; its full sequence is Cytoplasmic polyadenylation element-binding protein 4 (729 aa).

Disordered stretches follow at residues 20 to 50 and 78 to 133; these read FPVR…NNTA and EKAK…KEKL. Residues 24–35 show a composition bias toward basic residues; sequence FHPHLQPPHHHQ. Residues 83–96 are compositionally biased toward low complexity; sequence QQQEQQDPLEKQQL. 3 positions are modified to phosphoserine: Ser97, Ser99, and Ser137. The interval 218–324 is disordered; the sequence is FGGSFSPQIG…RDHRRGLNGG (107 aa). Residues 232–249 show a composition bias toward basic residues; sequence HHPHHPHFQHHHSQHQQQ. Phosphoserine occurs at positions 252 and 255. Residues 285–300 are compositionally biased toward low complexity; that stretch reads WSSYQSPSPTPSSSWS. Over residues 301–311 the composition is skewed to gly residues; it reads PGGGGYGGWGA. Thr326 bears the Phosphothreonine mark. Ser330 and Ser332 each carry phosphoserine. RRM domains are found at residues 472–563 and 580–662; these read RKVF…PWNL and KTIF…PYVL. An RNA-binding region spans residues 541 to 543; sequence KLY. The Zn(2+) site is built by Cys667, Cys675, Cys684, Cys689, Cys694, Cys697, His702, and His710.

The protein belongs to the RRM CPEB family. In terms of assembly, interacts with TOB1. In terms of tissue distribution, highly expressed in brain, including hippocampus, amygdala, granule and Purkinje cells of the cerebellum (at protein level). Expressed in spinal cord (at protein level). Expressed in kidney, lung and heart (at protein level). Expressed in liver (at protein level). Expressed in spleen and testis (at protein level). Weakly expressed in ovary and in granular cells of dentate gyrus and the pyramidal cells of CA3 and CA1 of the hippocampus.

The protein localises to the cytoplasm. The protein resides in the cell projection. It is found in the dendrite. Its subcellular location is the dendritic spine. It localises to the postsynaptic density. The protein localises to the axon. The protein resides in the growth cone. It is found in the endoplasmic reticulum. Its subcellular location is the perinuclear region. Sequence-specific RNA-binding protein that binds to the cytoplasmic polyadenylation element (CPE), an uridine-rich sequence element (consensus sequence 5'-UUUUUAU-3') within the mRNA 3'-UTR. RNA binding results in a clear conformational change analogous to the Venus fly trap mechanism. Regulates activation of unfolded protein response (UPR) in the process of adaptation to ER stress in liver, by maintaining translation of CPE-regulated mRNAs in conditions in which global protein synthesis is inhibited. Required for cell cycle progression, specifically for cytokinesis and chromosomal segregation. Plays a role as an oncogene promoting tumor growth and progression by positively regulating translation of t-plasminogen activator/PLAT. Stimulates proliferation of melanocytes. In contrast to CPEB1 and CPEB3, does not play role in synaptic plasticity, learning and memory. The chain is Cytoplasmic polyadenylation element-binding protein 4 (Cpeb4) from Mus musculus (Mouse).